The sequence spans 178 residues: ATP-dependent protease subunit HslV (178 aa).

The active site involves threonine 8. 3 residues coordinate Na(+): glycine 163, cysteine 166, and threonine 169.

It belongs to the peptidase T1B family. HslV subfamily. A double ring-shaped homohexamer of HslV is capped on each side by a ring-shaped HslU homohexamer. The assembly of the HslU/HslV complex is dependent on binding of ATP.

It localises to the cytoplasm. It catalyses the reaction ATP-dependent cleavage of peptide bonds with broad specificity.. Allosterically activated by HslU binding. Functionally, protease subunit of a proteasome-like degradation complex believed to be a general protein degrading machinery. This is ATP-dependent protease subunit HslV from Xylella fastidiosa (strain 9a5c).